Consider the following 261-residue polypeptide: Small ribosomal subunit protein uS2 (261 aa).

A disordered region spans residues 222-261 (GKALREQDGEANEEQPISEEEKKEVLEEAMSEEDFEGDKE). Acidic residues-rich tracts occupy residues 230 to 239 (GEANEEQPIS) and 248 to 261 (EEAM…GDKE).

Belongs to the universal ribosomal protein uS2 family.

The protein is Small ribosomal subunit protein uS2 of Campylobacter lari (strain RM2100 / D67 / ATCC BAA-1060).